Consider the following 200-residue polypeptide: Holliday junction branch migration complex subunit RuvA (200 aa).

The tract at residues 1–63 (MYAYVKGKLT…EDAQLLYGFS (63 aa)) is domain I. The segment at 64–142 (SEEEKDMFLS…ITEEDSDSLL (79 aa)) is domain II. Residues 143–149 (QVDATST) form a flexible linker region. Positions 150–200 (EQDQFVQEAMLALEALGYSKRELAKVEKTLNKNKYDSVDEAVKAGLQLVVS) are domain III.

This sequence belongs to the RuvA family. In terms of assembly, homotetramer. Forms an RuvA(8)-RuvB(12)-Holliday junction (HJ) complex. HJ DNA is sandwiched between 2 RuvA tetramers; dsDNA enters through RuvA and exits via RuvB. An RuvB hexamer assembles on each DNA strand where it exits the tetramer. Each RuvB hexamer is contacted by two RuvA subunits (via domain III) on 2 adjacent RuvB subunits; this complex drives branch migration. In the full resolvosome a probable DNA-RuvA(4)-RuvB(12)-RuvC(2) complex forms which resolves the HJ.

Its subcellular location is the cytoplasm. In terms of biological role, the RuvA-RuvB-RuvC complex processes Holliday junction (HJ) DNA during genetic recombination and DNA repair, while the RuvA-RuvB complex plays an important role in the rescue of blocked DNA replication forks via replication fork reversal (RFR). RuvA specifically binds to HJ cruciform DNA, conferring on it an open structure. The RuvB hexamer acts as an ATP-dependent pump, pulling dsDNA into and through the RuvAB complex. HJ branch migration allows RuvC to scan DNA until it finds its consensus sequence, where it cleaves and resolves the cruciform DNA. This Staphylococcus aureus (strain MRSA252) protein is Holliday junction branch migration complex subunit RuvA.